The chain runs to 140 residues: Nucleoside diphosphate kinase (140 aa).

Residues Lys11, Phe59, Arg87, Thr93, Arg104, and Asn114 each contribute to the ATP site. The Pros-phosphohistidine intermediate role is filled by His117.

It belongs to the NDK family. Homotetramer. Mg(2+) serves as cofactor.

It localises to the cytoplasm. It carries out the reaction a 2'-deoxyribonucleoside 5'-diphosphate + ATP = a 2'-deoxyribonucleoside 5'-triphosphate + ADP. The catalysed reaction is a ribonucleoside 5'-diphosphate + ATP = a ribonucleoside 5'-triphosphate + ADP. Functionally, major role in the synthesis of nucleoside triphosphates other than ATP. The ATP gamma phosphate is transferred to the NDP beta phosphate via a ping-pong mechanism, using a phosphorylated active-site intermediate. The polypeptide is Nucleoside diphosphate kinase (Gluconobacter oxydans (strain 621H) (Gluconobacter suboxydans)).